An 890-amino-acid polypeptide reads, in one-letter code: Alanine--tRNA ligase (890 aa).

Residues H572, H576, C674, and H678 each coordinate Zn(2+).

The protein belongs to the class-II aminoacyl-tRNA synthetase family. Zn(2+) serves as cofactor.

Its subcellular location is the cytoplasm. It catalyses the reaction tRNA(Ala) + L-alanine + ATP = L-alanyl-tRNA(Ala) + AMP + diphosphate. In terms of biological role, catalyzes the attachment of alanine to tRNA(Ala) in a two-step reaction: alanine is first activated by ATP to form Ala-AMP and then transferred to the acceptor end of tRNA(Ala). Also edits incorrectly charged Ser-tRNA(Ala) and Gly-tRNA(Ala) via its editing domain. This Saccharopolyspora erythraea (strain ATCC 11635 / DSM 40517 / JCM 4748 / NBRC 13426 / NCIMB 8594 / NRRL 2338) protein is Alanine--tRNA ligase.